A 169-amino-acid polypeptide reads, in one-letter code: Translationally-controlled tumor protein homolog (169 aa).

Residues 1–169 (MLIYKDILTG…WKHGLEEMKV (169 aa)) form the TCTP domain.

Belongs to the TCTP family.

It localises to the cytoplasm. The protein resides in the cytoskeleton. Its function is as follows. Involved in protein synthesis. Involved in microtubule stabilization. In Alternaria alternata (Alternaria rot fungus), this protein is Translationally-controlled tumor protein homolog.